Here is a 178-residue protein sequence, read N- to C-terminus: uncharacterized protein (178 aa).

A run of 4 helical transmembrane segments spans residues 3–23 (IPIILTLMLFSLGFIFGFISI), 56–76 (IFLMLAGSITFGLSTFINLIF), 101–121 (LILPHGIFEISAMLISAVAGF), and 150–170 (LSLISIILIVIAAFIEVYITP).

The protein to M.jannaschii MJ0706 and Synechocystis PCC 6803 slr1478.

The protein localises to the cell membrane. This is an uncharacterized protein from Methanocaldococcus jannaschii (strain ATCC 43067 / DSM 2661 / JAL-1 / JCM 10045 / NBRC 100440) (Methanococcus jannaschii).